The sequence spans 106 residues: Violacin-A (106 aa).

The first 29 residues, 1-29, serve as a signal peptide directing secretion; that stretch reads MDAQKMKMVIGLVLVATTAFALMIPAASA. Residues 30 to 79 constitute a propeptide that is removed on maturation; the sequence is VDDFITRRAYDNLVKSGAIKDIPVMAKTIISNPVLEEGMLTYYTNKKLGD. 3 disulfides stabilise this stretch: C84–C98, C88–C100, and C93–C105.

This sequence belongs to the cyclotide family. Moebius subfamily. In terms of processing, violacin-A is not a cyclic peptide.

Its function is as follows. Probably participates in a plant defense mechanism. Has low hemolytic activity. The protein is Violacin-A of Viola odorata (Sweet violet).